The primary structure comprises 443 residues: Ribosomal protein uS12 methylthiotransferase RimO (443 aa).

The MTTase N-terminal domain maps to 5-116; sequence PSVAVAHLGC…IVDVIQRAEA (112 aa). [4Fe-4S] cluster contacts are provided by cysteine 14, cysteine 50, cysteine 79, cysteine 154, cysteine 158, and cysteine 161. The Radical SAM core domain occupies 140 to 370; it reads TTTEGTAYVR…ALQQPISWQQ (231 aa). The 71-residue stretch at 372 to 442 folds into the TRAM domain; the sequence is QQEVGKTVQV…AYDLQGQLVS (71 aa).

It belongs to the methylthiotransferase family. RimO subfamily. [4Fe-4S] cluster serves as cofactor.

The protein localises to the cytoplasm. The enzyme catalyses L-aspartate(89)-[ribosomal protein uS12]-hydrogen + (sulfur carrier)-SH + AH2 + 2 S-adenosyl-L-methionine = 3-methylsulfanyl-L-aspartate(89)-[ribosomal protein uS12]-hydrogen + (sulfur carrier)-H + 5'-deoxyadenosine + L-methionine + A + S-adenosyl-L-homocysteine + 2 H(+). Functionally, catalyzes the methylthiolation of an aspartic acid residue of ribosomal protein uS12. The chain is Ribosomal protein uS12 methylthiotransferase RimO from Acaryochloris marina (strain MBIC 11017).